A 357-amino-acid chain; its full sequence is Arginine kinase Cal b 2.0101 (357 aa).

The region spanning 9 to 91 (KLEEGFKKLE…FDPIIEDYHK (83 aa)) is the Phosphagen kinase N-terminal domain. L-arginine is bound at residue 64 to 68 (GVGVY). Residues 119–356 (FVISTRVRCG…LELIKIEKEM (238 aa)) enclose the Phosphagen kinase C-terminal domain. Residues 122 to 126 (STRVR) and H185 contribute to the ATP site. C201 and C271 are joined by a disulfide. Residue E225 participates in L-arginine binding. R229 is an ATP binding site. C271 provides a ligand contact to L-arginine. ATP-binding positions include 280–284 (RASVH) and 309–314 (RGTRGE). E314 lines the L-arginine pocket.

The protein belongs to the ATP:guanido phosphotransferase family. In terms of tissue distribution, expressed in chela muscle (at protein level). Expressed in muscle.

It carries out the reaction L-arginine + ATP = N(omega)-phospho-L-arginine + ADP + H(+). Its function is as follows. Catalyzes the reversible transfer of high energy ATP gamma-phosphate group to L-arginine. This chain is Arginine kinase Cal b 2.0101, found in Callinectes bellicosus (Warrior swimming crab).